The chain runs to 515 residues: Nectin-1 (515 aa).

A signal peptide spans 1–30 (MARMGLAGAAGRWWGLALGLTAFFLPGAHT). The 111-residue stretch at 31–141 (QVVQVNDSMY…GNRESQLNLT (111 aa)) folds into the Ig-like V-type domain. Residues 31-355 (QVVQVNDSMY…GRRAGQVPTA (325 aa)) lie on the Extracellular side of the membrane. Residues Asn36, Asn72, Asn139, Asn202, Asn286, Asn297, Asn307, and Asn332 are each glycosylated (N-linked (GlcNAc...) asparagine). A disulfide bridge connects residues Cys51 and Cys124. 2 consecutive Ig-like C2-type domains span residues 145–243 (KPTN…TLNV) and 247–334 (PEVT…VNIT). 2 disulfides stabilise this stretch: Cys172-Cys226 and Cys269-Cys316. The tract at residues 282–299 (WTTLNGSLPKGVEAQNRT) is interaction with FGFR. The helical transmembrane segment at 356–376 (IIGGVVGSILLVLFVVGGIVV) threads the bilayer. The Cytoplasmic portion of the chain corresponds to 377 to 515 (ALCRRRHTFK…SFISKKEWYV (139 aa)). A disordered region spans residues 400–486 (YSKAGIPQHH…DGYGDRTLGY (87 aa)). Phosphoserine is present on residues Ser422, Ser434, and Ser435. A Phosphotyrosine modification is found at Tyr436. The span at 436–445 (YEEEEEEEGG) shows a compositional bias: acidic residues. Residues 446–464 (GGERKVGGPHPKYDEDAKR) are compositionally biased toward basic and acidic residues. Position 509 is a phosphoserine (Ser509).

It belongs to the nectin family. In terms of assembly, (Microbial infection) Interacts with herpes pseudorabies virus/PRV envelope glycoprotein D.

The protein resides in the cell membrane. The protein localises to the cell junction. Its subcellular location is the adherens junction. It localises to the presynaptic cell membrane. (Microbial infection) Acts as a receptor for herpes simplex virus 1/HHV-1, herpes simplex virus 2/HHV-2, and pseudorabies virus/PRV. The chain is Nectin-1 from Sus scrofa (Pig).